A 303-amino-acid chain; its full sequence is Acetylglutamate kinase (303 aa).

Substrate contacts are provided by residues 76 to 77 (GG), arginine 98, and asparagine 199.

Belongs to the acetylglutamate kinase family. ArgB subfamily.

Its subcellular location is the cytoplasm. It carries out the reaction N-acetyl-L-glutamate + ATP = N-acetyl-L-glutamyl 5-phosphate + ADP. It functions in the pathway amino-acid biosynthesis; L-arginine biosynthesis; N(2)-acetyl-L-ornithine from L-glutamate: step 2/4. Its function is as follows. Catalyzes the ATP-dependent phosphorylation of N-acetyl-L-glutamate. In Clavibacter michiganensis subsp. michiganensis (strain NCPPB 382), this protein is Acetylglutamate kinase.